Here is a 240-residue protein sequence, read N- to C-terminus: Glutathione S-transferase omega-1 (240 aa).

Position 2 is an N-acetylserine (serine 2). Residues 22-101 enclose the GST N-terminal domain; the sequence is GQIRVYSMRF…YLDEAYPEKK (80 aa). Cysteine 32 functions as the Nucleophile in the catalytic mechanism. The residue at position 57 (lysine 57) is an N6-acetyllysine. Glutathione contacts are provided by residues lysine 59, valine 72, and 85–86; that span reads ES. One can recognise a GST C-terminal domain in the interval 106 to 227; it reads DPYKKARQKM…AKTYREYLNL (122 aa). Serine 129 is subject to Phosphoserine. Lysine 152 bears the N6-acetyllysine mark.

This sequence belongs to the GST superfamily. Omega family. In terms of assembly, homodimer.

The protein localises to the cytoplasm. It localises to the cytosol. The catalysed reaction is RX + glutathione = an S-substituted glutathione + a halide anion + H(+). It carries out the reaction L-dehydroascorbate + 2 glutathione = glutathione disulfide + L-ascorbate. The enzyme catalyses methylarsonate + 2 glutathione + H(+) = methylarsonous acid + glutathione disulfide + H2O. Functionally, exhibits glutathione-dependent thiol transferase and dehydroascorbate reductase activities. Has S-(phenacyl)glutathione reductase activity. Also has glutathione S-transferase activity. Participates in the biotransformation of inorganic arsenic and reduces monomethylarsonic acid (MMA) and dimethylarsonic acid. The chain is Glutathione S-transferase omega-1 (Gsto1) from Mus musculus (Mouse).